A 416-amino-acid polypeptide reads, in one-letter code: METSSPWPPRPSPSAGLSLEARLGVDTRLWAKVLFTALYSLIFAFGTAGNALSVHVVLKARAGRPGRLRYHVLSLALSALLLLLVSMPMELYNFVWSHYPWVFGDLGCRGYYFVRELCAYATVLSVASLSAERCLAVCQPLRARRLLTPRRTRRLLSLVWVASLGLALPMAVIMGQKHEVESADGEPEPASRVCTVLVSRATLQVFIQVNVLVSFALPLALTAFLNGITVNHLMALYSQVPSASAQVSSIPSRLELLSEEGLLGFITWRKTLSLGVQASLVRHKDASQIRSLQHSAQVLRAIVAVYVICWLPYHARRLMYCYIPDDGWTNELYDFYHYFYMVTNTLFYVSSAVTPILYNAVSSSFRKLFLESLGSLCGEQHSLVPLPQEAPESTTSTYSFRLWGSPRNPSLGEIQV.

At 1-32 the chain is on the extracellular side; that stretch reads METSSPWPPRPSPSAGLSLEARLGVDTRLWAK. A helical membrane pass occupies residues 33 to 55; the sequence is VLFTALYSLIFAFGTAGNALSVH. The Cytoplasmic segment spans residues 56 to 64; the sequence is VVLKARAGR. A helical transmembrane segment spans residues 65 to 87; sequence PGRLRYHVLSLALSALLLLLVSM. Residues 88 to 109 are Extracellular-facing; it reads PMELYNFVWSHYPWVFGDLGCR. A disulfide bridge links Cys108 with Cys194. The chain crosses the membrane as a helical span at residues 110 to 131; it reads GYYFVRELCAYATVLSVASLSA. Topologically, residues 132 to 154 are cytoplasmic; sequence ERCLAVCQPLRARRLLTPRRTRR. Residues 155 to 176 form a helical membrane-spanning segment; it reads LLSLVWVASLGLALPMAVIMGQ. Over 177 to 216 the chain is Extracellular; the sequence is KHEVESADGEPEPASRVCTVLVSRATLQVFIQVNVLVSFA. Residues 217–237 traverse the membrane as a helical segment; the sequence is LPLALTAFLNGITVNHLMALY. Residues 238 to 297 lie on the Cytoplasmic side of the membrane; the sequence is SQVPSASAQVSSIPSRLELLSEEGLLGFITWRKTLSLGVQASLVRHKDASQIRSLQHSAQ. Residues 298 to 318 form a helical membrane-spanning segment; sequence VLRAIVAVYVICWLPYHARRL. The Extracellular segment spans residues 319–337; sequence MYCYIPDDGWTNELYDFYH. Residues 338–358 traverse the membrane as a helical segment; the sequence is YFYMVTNTLFYVSSAVTPILY. The Cytoplasmic portion of the chain corresponds to 359 to 416; that stretch reads NAVSSSFRKLFLESLGSLCGEQHSLVPLPQEAPESTTSTYSFRLWGSPRNPSLGEIQV. The S-palmitoyl cysteine moiety is linked to residue Cys377. The residue at position 410 (Ser410) is a Phosphoserine.

The protein belongs to the G-protein coupled receptor 1 family. Neurotensin receptor subfamily. NTSR2 sub-subfamily. Abundant in cortex and hypothalamus, and lower levels seen in the heart and intestine.

Its subcellular location is the cell membrane. Functionally, receptor for the tridecapeptide neurotensin. It is associated with G proteins that activate a phosphatidylinositol-calcium second messenger system. The protein is Neurotensin receptor type 2 (Ntsr2) of Rattus norvegicus (Rat).